The sequence spans 390 residues: Protein DDI1 homolog (390 aa).

The active site involves Asp205. The disordered stretch occupies residues 322 to 344 (MHAPRHQDPATTATTASNPAAPV). The span at 330–343 (PATTATTASNPAAP) shows a compositional bias: low complexity.

This sequence belongs to the DDI1 family.

It localises to the cytoplasm. With respect to regulation, inhibited by pepstatin, diazoacetyl-DL-norleucine methyl ester (DAN) and nelfinavir. Inhibited by the proteinase inhibitors lopinavir and ritonavir. Its function is as follows. Aspartic protease. This is Protein DDI1 homolog from Leishmania major.